Here is a 221-residue protein sequence, read N- to C-terminus: Peptide methionine sulfoxide reductase MsrA (221 aa).

Cysteine 54 is a catalytic residue.

Belongs to the MsrA Met sulfoxide reductase family.

The enzyme catalyses L-methionyl-[protein] + [thioredoxin]-disulfide + H2O = L-methionyl-(S)-S-oxide-[protein] + [thioredoxin]-dithiol. It carries out the reaction [thioredoxin]-disulfide + L-methionine + H2O = L-methionine (S)-S-oxide + [thioredoxin]-dithiol. Its function is as follows. Has an important function as a repair enzyme for proteins that have been inactivated by oxidation. Catalyzes the reversible oxidation-reduction of methionine sulfoxide in proteins to methionine. This chain is Peptide methionine sulfoxide reductase MsrA, found in Methylobacterium nodulans (strain LMG 21967 / CNCM I-2342 / ORS 2060).